The chain runs to 217 residues: Protein-L-isoaspartate O-methyltransferase (217 aa).

Residue Ser61 is part of the active site.

Belongs to the methyltransferase superfamily. L-isoaspartyl/D-aspartyl protein methyltransferase family.

The protein resides in the cytoplasm. It catalyses the reaction [protein]-L-isoaspartate + S-adenosyl-L-methionine = [protein]-L-isoaspartate alpha-methyl ester + S-adenosyl-L-homocysteine. Functionally, catalyzes the methyl esterification of L-isoaspartyl residues in peptides and proteins that result from spontaneous decomposition of normal L-aspartyl and L-asparaginyl residues. It plays a role in the repair and/or degradation of damaged proteins. The chain is Protein-L-isoaspartate O-methyltransferase from Brucella anthropi (strain ATCC 49188 / DSM 6882 / CCUG 24695 / JCM 21032 / LMG 3331 / NBRC 15819 / NCTC 12168 / Alc 37) (Ochrobactrum anthropi).